Reading from the N-terminus, the 347-residue chain is Protein PET130 (347 aa).

Its subcellular location is the mitochondrion matrix. The sequence is that of Protein PET130 (PET130) from Saccharomyces cerevisiae (strain ATCC 204508 / S288c) (Baker's yeast).